The following is a 113-amino-acid chain: Ribosome-binding factor A (113 aa).

It belongs to the RbfA family. In terms of assembly, monomer. Binds 30S ribosomal subunits, but not 50S ribosomal subunits or 70S ribosomes.

The protein localises to the cytoplasm. Its function is as follows. One of several proteins that assist in the late maturation steps of the functional core of the 30S ribosomal subunit. Associates with free 30S ribosomal subunits (but not with 30S subunits that are part of 70S ribosomes or polysomes). Required for efficient processing of 16S rRNA. May interact with the 5'-terminal helix region of 16S rRNA. This chain is Ribosome-binding factor A, found in Lactococcus lactis subsp. cremoris (Streptococcus cremoris).